We begin with the raw amino-acid sequence, 624 residues long: APC membrane recruitment protein 2 (624 aa).

Disordered stretches follow at residues 1 to 308 (MDSH…PPSE) and 342 to 596 (EDVG…IPVS). The span at 74–91 (SGKKEDAGGGEAQGKDAP) shows a compositional bias: basic and acidic residues. Residues 101–111 (SASSSVAKSHS) are compositionally biased toward low complexity. 2 stretches are compositionally biased toward basic and acidic residues: residues 120 to 132 (GRPE…ENAE) and 247 to 258 (RRLEELCGERPD). 2 stretches are compositionally biased toward low complexity: residues 272 to 282 (ITGDIPITTIP) and 295 to 307 (AAAP…DPPS). Residues 406–416 (TGGGGGGGGGT) are compositionally biased toward gly residues. Over residues 450–464 (NNKEEQKGREKEQHE) the composition is skewed to basic and acidic residues. Polar residues predominate over residues 535-549 (PITTTCSLKTPSSTV).

It belongs to the Amer family.

It localises to the cell membrane. Negative regulator of the canonical Wnt signaling pathway involved in neuroectodermal patterning. Acts by specifically binding phosphatidylinositol 4,5-bisphosphate (PtdIns(4,5)P2), translocating to the cell membrane and interacting with key regulators of the canonical Wnt signaling pathway, such as components of the beta-catenin destruction complex. The chain is APC membrane recruitment protein 2 (AMER2) from Gallus gallus (Chicken).